The chain runs to 245 residues: 1-(5-phosphoribosyl)-5-[(5-phosphoribosylamino)methylideneamino] imidazole-4-carboxamide isomerase (245 aa).

Asp7 functions as the Proton acceptor in the catalytic mechanism. Residue Asp129 is the Proton donor of the active site.

The protein belongs to the HisA/HisF family.

Its subcellular location is the cytoplasm. The enzyme catalyses 1-(5-phospho-beta-D-ribosyl)-5-[(5-phospho-beta-D-ribosylamino)methylideneamino]imidazole-4-carboxamide = 5-[(5-phospho-1-deoxy-D-ribulos-1-ylimino)methylamino]-1-(5-phospho-beta-D-ribosyl)imidazole-4-carboxamide. It participates in amino-acid biosynthesis; L-histidine biosynthesis; L-histidine from 5-phospho-alpha-D-ribose 1-diphosphate: step 4/9. In Escherichia coli O7:K1 (strain IAI39 / ExPEC), this protein is 1-(5-phosphoribosyl)-5-[(5-phosphoribosylamino)methylideneamino] imidazole-4-carboxamide isomerase.